A 179-amino-acid chain; its full sequence is ATP synthase subunit delta, chloroplastic (179 aa).

This sequence belongs to the ATPase delta chain family. As to quaternary structure, F-type ATPases have 2 components, F(1) - the catalytic core - and F(0) - the membrane proton channel. F(1) has five subunits: alpha(3), beta(3), gamma(1), delta(1), epsilon(1). CF(0) has four main subunits: a(1), b(1), b'(1) and c(10-14). The alpha and beta chains form an alternating ring which encloses part of the gamma chain. F(1) is attached to F(0) by a central stalk formed by the gamma and epsilon chains, while a peripheral stalk is formed by the delta, b and b' chains.

It is found in the plastid. Its subcellular location is the chloroplast thylakoid membrane. In terms of biological role, f(1)F(0) ATP synthase produces ATP from ADP in the presence of a proton or sodium gradient. F-type ATPases consist of two structural domains, F(1) containing the extramembraneous catalytic core and F(0) containing the membrane proton channel, linked together by a central stalk and a peripheral stalk. During catalysis, ATP synthesis in the catalytic domain of F(1) is coupled via a rotary mechanism of the central stalk subunits to proton translocation. Functionally, this protein is part of the stalk that links CF(0) to CF(1). It either transmits conformational changes from CF(0) to CF(1) or is implicated in proton conduction. This chain is ATP synthase subunit delta, chloroplastic, found in Ochrosphaera neapolitana.